A 313-amino-acid chain; its full sequence is Protein ABA AND ROS SENSITIVE 1 (313 aa).

The Nuclear localization signal 1 signature appears at 5-12; the sequence is AKKKAMFR. The segment at 39-61 adopts a C2H2-type zinc-finger fold; sequence CRVCNVVLKSESLWDVHQASRKH. The span at 115–131 shows a compositional bias: basic and acidic residues; that stretch reads ARAEVEPAKSKNLEQSK. Disordered regions lie at residues 115-189, 232-254, and 271-313; these read ARAE…LPTG, MEEE…QRSY, and ARLA…AQHL. Residues 155–176 are compositionally biased toward polar residues; sequence TDSSNTKTTSEPKQSQTQTTGP. The segment covering 232–248 has biased composition (acidic residues); sequence MEEEEVDAAETIEEEEQ. A coiled-coil region spans residues 232 to 271; it reads MEEEEVDAAETIEEEEQREQRSYKEKVEILKRKKMELKAA. Positions 274-281 match the Nuclear localization signal 2 motif; sequence AKRSKTSE. Over residues 293-305 the composition is skewed to acidic residues; sequence ESPSDEEDDEDSA.

Mostly expressed in siliques and, to a lower extent, in roots. Barely deteclable in leaves and stems.

It localises to the nucleus. The protein localises to the cytoplasm. Functionally, essential for breaking seed dormancy before seed germination. Prevents reactive oxygen species (ROS) accumulation in response to abscisic acid (ABA) and oxidative stress, probably by repressing the accumulation of ABA-induced ROS-scavenging enzymes (e.g. CSD3). The sequence is that of Protein ABA AND ROS SENSITIVE 1 from Arabidopsis thaliana (Mouse-ear cress).